Here is a 368-residue protein sequence, read N- to C-terminus: tRNA-specific 2-thiouridylase MnmA (368 aa).

Residues 11–18 and Met-37 each bind ATP; that span reads GMSGGVDS. The interaction with target base in tRNA stretch occupies residues 97–99; it reads NPD. Catalysis depends on Cys-102, which acts as the Nucleophile. A disulfide bond links Cys-102 and Cys-199. Gly-127 provides a ligand contact to ATP. The segment at 149-151 is interaction with tRNA; the sequence is KDQ. Cys-199 functions as the Cysteine persulfide intermediate in the catalytic mechanism. Residues 311-312 form an interaction with tRNA region; the sequence is RY.

The protein belongs to the MnmA/TRMU family. Interacts with TusE.

The protein localises to the cytoplasm. It carries out the reaction S-sulfanyl-L-cysteinyl-[protein] + uridine(34) in tRNA + AH2 + ATP = 2-thiouridine(34) in tRNA + L-cysteinyl-[protein] + A + AMP + diphosphate + H(+). Catalyzes the 2-thiolation of uridine at the wobble position (U34) of tRNA(Lys), tRNA(Glu) and tRNA(Gln), leading to the formation of s(2)U34, the first step of tRNA-mnm(5)s(2)U34 synthesis. Sulfur is provided by IscS, via a sulfur-relay system. Binds ATP and its substrate tRNAs. The protein is tRNA-specific 2-thiouridylase MnmA of Salmonella paratyphi B (strain ATCC BAA-1250 / SPB7).